Here is a 152-residue protein sequence, read N- to C-terminus: Melatonin receptor type 1B (152 aa).

The Cytoplasmic portion of the chain corresponds to 1–12 (HSFVYEKLFSLW). Residues 13–33 (NTILYVCLIWTLTVVATVPNF) traverse the membrane as a helical segment. Over 34–57 (FVGSLEYDPRIYSCTFVQTVSSSY) the chain is Extracellular. Residues 58-78 (TITVVVIHFILPITVVTFCYL) traverse the membrane as a helical segment. The Cytoplasmic portion of the chain corresponds to 79–110 (RIWILVIQVRRKVKSEFKPRMKQSDFRNFLTM). A helical membrane pass occupies residues 111-131 (FVVFVIFAFCWAPLNFIGLAV). Residues 132-144 (SINPTEVAPKIPE) are Extracellular-facing. The helical transmembrane segment at 145-152 (WLFVVSYF) threads the bilayer.

This sequence belongs to the G-protein coupled receptor 1 family.

It is found in the cell membrane. In terms of biological role, high affinity receptor for melatonin. The activity of this receptor is mediated by pertussis toxin sensitive G proteins that inhibits adenylate cyclase activity. This Xenopus laevis (African clawed frog) protein is Melatonin receptor type 1B (mtnr1b).